Reading from the N-terminus, the 232-residue chain is 5'-methylthioadenosine/S-adenosylhomocysteine nucleosidase (232 aa).

Glu-14 functions as the Proton acceptor in the catalytic mechanism. Substrate contacts are provided by residues Gly-80, Val-154, and 175–176 (ME). The Proton donor role is filled by Asp-199.

Belongs to the PNP/UDP phosphorylase family. MtnN subfamily.

It catalyses the reaction S-adenosyl-L-homocysteine + H2O = S-(5-deoxy-D-ribos-5-yl)-L-homocysteine + adenine. The catalysed reaction is S-methyl-5'-thioadenosine + H2O = 5-(methylsulfanyl)-D-ribose + adenine. It carries out the reaction 5'-deoxyadenosine + H2O = 5-deoxy-D-ribose + adenine. It functions in the pathway amino-acid biosynthesis; L-methionine biosynthesis via salvage pathway; S-methyl-5-thio-alpha-D-ribose 1-phosphate from S-methyl-5'-thioadenosine (hydrolase route): step 1/2. In terms of biological role, catalyzes the irreversible cleavage of the glycosidic bond in both 5'-methylthioadenosine (MTA) and S-adenosylhomocysteine (SAH/AdoHcy) to adenine and the corresponding thioribose, 5'-methylthioribose and S-ribosylhomocysteine, respectively. Also cleaves 5'-deoxyadenosine, a toxic by-product of radical S-adenosylmethionine (SAM) enzymes, into 5-deoxyribose and adenine. This Haemophilus ducreyi (strain 35000HP / ATCC 700724) protein is 5'-methylthioadenosine/S-adenosylhomocysteine nucleosidase.